Here is a 501-residue protein sequence, read N- to C-terminus: Geissoschizine oxidase (501 aa).

The helical transmembrane segment at 1–21 threads the bilayer; the sequence is MEFSFSSPLLYILYFLLFFIV. Heme is bound at residue cysteine 442.

Belongs to the cytochrome P450 family. The cofactor is heme.

It is found in the membrane. The catalysed reaction is (19E)-geissoschizine + reduced [NADPH--hemoprotein reductase] + O2 = akuammicine + formate + oxidized [NADPH--hemoprotein reductase] + H2O + H(+). It participates in alkaloid biosynthesis. Functionally, a cytochrome P450 monooxygenase involved in the biosynthesis of strychnos monoterpene indole alkaloids (MIAs) natural products, compounds with effects on glucose absorption. Catalyzes the conversion of geissoschizine to akuammicine. The protein is Geissoschizine oxidase of Alstonia scholaris (Dogbane).